The chain runs to 304 residues: MGIDFLFILKALIIAIVEGLTEFVPVSSTGHMILVGDLIHFNTQSGGFPEMYEVVIQLGAILAVVVLYWRKISSSVVEFLSYIFSFIGLKASGDKRKYEKRLAESKTGFRFGINVIIGTIPAAILGLLFHDEIKEYLFSTKTVAIGFIVGGILLIVIENNFRKRAKRSKIVKDIDKMTYGQSLLVGCFQCLSLWPGMSRSASTIMGGWISGLSTTVATEFTFFLAIPAMVGASGLDLFKFDYSQMNATNLISLILGFIVAFIVSLVVIDKFINYLKKKPMRIFAIYRVFAGIVLAILIFTKVIS.

Transmembrane regions (helical) follow at residues 5–25 (FLFI…EFVP), 47–67 (GFPE…VVVL), 72–92 (ISSS…LKAS), 111–131 (FGIN…LFHD), 137–157 (LFST…LIVI), 209–231 (ISGL…AMVG), 248–268 (TNLI…LVVI), and 282–302 (IFAI…FTKV).

It belongs to the UppP family.

Its subcellular location is the cell membrane. The enzyme catalyses di-trans,octa-cis-undecaprenyl diphosphate + H2O = di-trans,octa-cis-undecaprenyl phosphate + phosphate + H(+). Catalyzes the dephosphorylation of undecaprenyl diphosphate (UPP). Confers resistance to bacitracin. This chain is Undecaprenyl-diphosphatase, found in Clostridium perfringens (strain SM101 / Type A).